Here is a 507-residue protein sequence, read N- to C-terminus: Histidine ammonia-lyase (507 aa).

A cross-link (5-imidazolinone (Ala-Gly)) is located at residues 141-143 (ASG). 2,3-didehydroalanine (Ser) is present on serine 142.

The protein belongs to the PAL/histidase family. Post-translationally, contains an active site 4-methylidene-imidazol-5-one (MIO), which is formed autocatalytically by cyclization and dehydration of residues Ala-Ser-Gly.

It is found in the cytoplasm. It catalyses the reaction L-histidine = trans-urocanate + NH4(+). The protein operates within amino-acid degradation; L-histidine degradation into L-glutamate; N-formimidoyl-L-glutamate from L-histidine: step 1/3. The sequence is that of Histidine ammonia-lyase from Burkholderia cenocepacia (strain HI2424).